The sequence spans 60 residues: Conotoxin Pu5.6 (60 aa).

An N-terminal signal peptide occupies residues 1–19; that stretch reads MRCVPVFVILLLLIASAAS. Positions 20–47 are excised as a propeptide; that stretch reads IDAQQKTKDDAPLTSLNDNALQQHWNKR.

The protein belongs to the conotoxin T superfamily. Post-translationally, contains 2 disulfide bonds that can be either 'C1-C3, C2-C4' or 'C1-C4, C2-C3', since these disulfide connectivities have been observed for conotoxins with cysteine framework V (for examples, see AC P0DQQ7 and AC P81755). In terms of tissue distribution, expressed by the venom duct.

Its subcellular location is the secreted. The chain is Conotoxin Pu5.6 from Conus pulicarius (Flea-bitten cone).